The chain runs to 220 residues: Probable septum site-determining protein MinC (220 aa).

Belongs to the MinC family. Interacts with MinD and FtsZ.

Its function is as follows. Cell division inhibitor that blocks the formation of polar Z ring septums. Rapidly oscillates between the poles of the cell to destabilize FtsZ filaments that have formed before they mature into polar Z rings. Prevents FtsZ polymerization. The polypeptide is Probable septum site-determining protein MinC (Vibrio vulnificus (strain CMCP6)).